A 129-amino-acid polypeptide reads, in one-letter code: UPF0102 protein Cpar_0015 (129 aa).

The protein belongs to the UPF0102 family.

The chain is UPF0102 protein Cpar_0015 from Chlorobaculum parvum (strain DSM 263 / NCIMB 8327) (Chlorobium vibrioforme subsp. thiosulfatophilum).